A 263-amino-acid chain; its full sequence is ATP synthase subunit b 2 (263 aa).

A helical transmembrane segment spans residues 2 to 22; sequence LIDPLTVVAQIINFLILVALL.

The protein belongs to the ATPase B chain family. As to quaternary structure, F-type ATPases have 2 components, F(1) - the catalytic core - and F(0) - the membrane proton channel. F(1) has five subunits: alpha(3), beta(3), gamma(1), delta(1), epsilon(1). F(0) has four main subunits: a(1), b(1), b'(1) and c(10-14). The alpha and beta chains form an alternating ring which encloses part of the gamma chain. F(1) is attached to F(0) by a central stalk formed by the gamma and epsilon chains, while a peripheral stalk is formed by the delta, b and b' chains.

The protein resides in the cellular thylakoid membrane. In terms of biological role, f(1)F(0) ATP synthase produces ATP from ADP in the presence of a proton or sodium gradient. F-type ATPases consist of two structural domains, F(1) containing the extramembraneous catalytic core and F(0) containing the membrane proton channel, linked together by a central stalk and a peripheral stalk. During catalysis, ATP synthesis in the catalytic domain of F(1) is coupled via a rotary mechanism of the central stalk subunits to proton translocation. Functionally, component of the F(0) channel, it forms part of the peripheral stalk, linking F(1) to F(0). This is ATP synthase subunit b 2 from Acaryochloris marina (strain MBIC 11017).